Consider the following 347-residue polypeptide: Toluene-4-sulfonate monooxygenase system iron-sulfur subunit TsaM1 (347 aa).

Positions 7–109 constitute a Rieske domain; sequence WYVAAWDTEI…VVERNRLVWI (103 aa). Cys-48, His-50, Cys-67, and His-70 together coordinate [2Fe-2S] cluster.

In terms of assembly, homotetramer. Part of the p-toluenesulfonate methyl-monooxygenase complex TsaBM, comprising the reductase TsaB and the oxygenase TsaM. The cofactor is [2Fe-2S] cluster.

It catalyses the reaction toluene-4-sulfonate + NADH + O2 + H(+) = 4-(hydroxymethyl)benzenesulfonate + NAD(+) + H2O. Its function is as follows. Involved in the toluene-4-sulfonate degradation pathway. Does not discriminate between the sulfonate and the carboxyl substituents and can also be involved in the p-toluenecarboxylate degradation pathway. Can use toluene-4-sulfonate, p-toluate, m-toluate and 4-ethylbenzoate as substrates, but not p-xylene, toluene and p-cresol. Also catalyzes the demethylation of 4-methoxybenzoate to 4-hydroxybenzoate. The polypeptide is Toluene-4-sulfonate monooxygenase system iron-sulfur subunit TsaM1 (tsaM1) (Comamonas testosteroni (Pseudomonas testosteroni)).